The following is a 250-amino-acid chain: Ribosomal RNA small subunit methyltransferase J (250 aa).

S-adenosyl-L-methionine-binding positions include 101 to 102, 117 to 118, 153 to 154, and D171; these read RD, ER, and SS.

This sequence belongs to the methyltransferase superfamily. RsmJ family.

Its subcellular location is the cytoplasm. It catalyses the reaction guanosine(1516) in 16S rRNA + S-adenosyl-L-methionine = N(2)-methylguanosine(1516) in 16S rRNA + S-adenosyl-L-homocysteine + H(+). Functionally, specifically methylates the guanosine in position 1516 of 16S rRNA. The protein is Ribosomal RNA small subunit methyltransferase J of Shigella dysenteriae serotype 1 (strain Sd197).